A 499-amino-acid chain; its full sequence is Apolipoprotein N-acyltransferase (499 aa).

The next 6 helical transmembrane spans lie at 18-38, 50-70, 82-102, 105-125, 156-176, and 182-202; these read FSPY…LIIT, LGFL…YISI, IIII…FVIL, FFFP…AWMI, PIIG…MCVL, and SYYP…LNFF. Positions 217 to 461 constitute a CN hydrolase domain; the sequence is IQGNISQHTY…NDFLLEEVFS (245 aa). Glu257 acts as the Proton acceptor in catalysis. Residue Lys320 is part of the active site. Cys372 functions as the Nucleophile in the catalytic mechanism. The helical transmembrane segment at 476 to 496 threads the bilayer; sequence LLFFSIICFIISFFIKIKLIF.

The protein belongs to the CN hydrolase family. Apolipoprotein N-acyltransferase subfamily.

Its subcellular location is the cell membrane. It catalyses the reaction N-terminal S-1,2-diacyl-sn-glyceryl-L-cysteinyl-[lipoprotein] + a glycerophospholipid = N-acyl-S-1,2-diacyl-sn-glyceryl-L-cysteinyl-[lipoprotein] + a 2-acyl-sn-glycero-3-phospholipid + H(+). Its pathway is protein modification; lipoprotein biosynthesis (N-acyl transfer). Its function is as follows. Catalyzes the phospholipid dependent N-acylation of the N-terminal cysteine of apolipoprotein, the last step in lipoprotein maturation. The polypeptide is Apolipoprotein N-acyltransferase (Wigglesworthia glossinidia brevipalpis).